A 495-amino-acid chain; its full sequence is Cobyric acid synthase (495 aa).

Residues 252-439 (RIRIAAPMLS…VHGLFAQDAF (188 aa)) form the GATase cobBQ-type domain. C334 serves as the catalytic Nucleophile. H431 is a catalytic residue.

The protein belongs to the CobB/CobQ family. CobQ subfamily.

The protein operates within cofactor biosynthesis; adenosylcobalamin biosynthesis. Catalyzes amidations at positions B, D, E, and G on adenosylcobyrinic A,C-diamide. NH(2) groups are provided by glutamine, and one molecule of ATP is hydrogenolyzed for each amidation. The protein is Cobyric acid synthase of Hyphomonas neptunium (strain ATCC 15444).